The sequence spans 85 residues: Large ribosomal subunit protein bL27 (85 aa).

Residues 1–21 (MAHKKAAGSSRNGRDSESKRL) are disordered.

It belongs to the bacterial ribosomal protein bL27 family.

This is Large ribosomal subunit protein bL27 from Chromohalobacter salexigens (strain ATCC BAA-138 / DSM 3043 / CIP 106854 / NCIMB 13768 / 1H11).